A 132-amino-acid chain; its full sequence is Small ribosomal subunit protein uS8 (132 aa).

This sequence belongs to the universal ribosomal protein uS8 family. In terms of assembly, part of the 30S ribosomal subunit. Contacts proteins S5 and S12.

One of the primary rRNA binding proteins, it binds directly to 16S rRNA central domain where it helps coordinate assembly of the platform of the 30S subunit. The chain is Small ribosomal subunit protein uS8 from Clostridium botulinum (strain ATCC 19397 / Type A).